Consider the following 622-residue polypeptide: Pheromone-regulated protein PRM7 (622 aa).

Disordered regions lie at residues 1-35 (MYRTRSSDEVATLTDPTSSSDVATSADPTSSSAVT), 47-200 (STSV…TISA), and 374-405 (LTPVDSASSSRSSATSIIKPNMPVSSNDSKTQ). Over residues 14–35 (TDPTSSSDVATSADPTSSSAVT) the composition is skewed to polar residues. Composition is skewed to low complexity over residues 47–199 (STSV…VTIS) and 379–389 (SASSSRSSATS). Residues 396-405 (PVSSNDSKTQ) are compositionally biased toward polar residues.

The protein is Pheromone-regulated protein PRM7 (PRM7) of Saccharomyces cerevisiae (strain YJM789) (Baker's yeast).